Here is a 421-residue protein sequence, read N- to C-terminus: MSEIVVEGGRKLIGEVPISGSKNAALPILAAAVMIDEPVVLDNVPELKDVFTMLTILQRIGKKVSFRDNRVVVEPGNVLMGDVPYELVRMMRASFNVLGPLTMVCGWAKVGKPGGCNIGQRPVDFHIEGLKALGFLIKEEHGDVIAKKPSSFKEELYYKLPFPSVGATEQLMTVAALMSESKTIIENVAREPEIQDLQNFLNKAGAKIKGAGTDRIEIEGVEKLHGIEYHIIPDRIEAGTYLLAGVSTRGRVKVSNVIPEHLEALLKVLDELGVSITCDKNSIEVSVSGELKPIRVSTAPYPGFPTDLQPMLTAVLCTVPGESIIEEKVFENRFGYVDEMNRMSANIKVMNRVAHIVGVEKLSGAQIYAPDIRATAGMLIAALSAEGQTVIKNAAHIFRGYEKLKEKFTTIGAQIEVYPEE.

22-23 (KN) provides a ligand contact to phosphoenolpyruvate. Arg92 lines the UDP-N-acetyl-alpha-D-glucosamine pocket. Cys116 acts as the Proton donor in catalysis. 2-(S-cysteinyl)pyruvic acid O-phosphothioketal is present on Cys116. The UDP-N-acetyl-alpha-D-glucosamine site is built by Asp307 and Val329.

Belongs to the EPSP synthase family. MurA subfamily.

It is found in the cytoplasm. It catalyses the reaction phosphoenolpyruvate + UDP-N-acetyl-alpha-D-glucosamine = UDP-N-acetyl-3-O-(1-carboxyvinyl)-alpha-D-glucosamine + phosphate. It participates in cell wall biogenesis; peptidoglycan biosynthesis. In terms of biological role, cell wall formation. Adds enolpyruvyl to UDP-N-acetylglucosamine. This is UDP-N-acetylglucosamine 1-carboxyvinyltransferase from Kosmotoga olearia (strain ATCC BAA-1733 / DSM 21960 / TBF 19.5.1).